A 941-amino-acid polypeptide reads, in one-letter code: MSASKEGKEKKGKLLGVENISPPKDKRPATRMKLLNDVGAGEDSEASTTTTTSRTPSNKQEKRGSVAGSRIKILNEEILGTPKTEKRGATKSTAPAASTVKILNEKKTPSATVTAVETTKIKTSPSKRKKMEHYVLQAVKSENTKADTTVTVVTEEDDTIDFILADDEEVVPGRIENNNGQEIVVTEDDEDLGEDGDEDGEDSSGKGNSSQTKIKEIVEHVCGKCYKTFRRVQSLKKHLEFCRYDSGYHLRKADMLKNLEKIEKDAVVMEKKDICFCCSESYDTFHLGHINCPDCPKSFKTQTSYERHIFITHSEFSDFPCSICNANLRSEALLALHEEQHKSRGKPYACKICGKDFTRSYHLKRHQKYSSCSSNETDTMSCKVCDRVFYRLDNLRSHLKQHLGTQVVKKPEYMCHTCKNCFYSLSTLNIHIRTHTGEKPFDCDLCDKKFSALVALKKHRRYHTGEKPYSCTVCNQAFAVKEVLNRHMKRHTGERPHKCDECGKSFIQATQLRTHSKTHIRPFPCEQCDEKFKTEKQLERHVKTHSRTKRPVFSCAECKRNFRTPALLKEHMDEGKHSPKQQRSSMRSAVKIMERTDCAICDKNFDSSDTLRRHIRTVHECDPDDIFGVEPHPSKRAKKDIESEEVVPVALNTSAGSLISSQTDGNGVVVREFLVDEGDGAAQTITLENETYTILPLDGAIEGEQLTDEAGVKPEAKKEEAQVSPVVKKEQRKSLAASLAAAIADNLEESCSEDDFSGEILTEEDIKLKENVGKLIDMLVDPPILKKYGWPNAPEETVLCKVIENCGHDLTKGGENYAELDYGSRMREYCKLLFTVVIHNDSIKSLLNNFPIDDVIEYVLGDEDQDEGGLDKDNESHSGDEEAVSVTGETKTNEIREKPEKKEVSAKSEKKEIVGKAVDKDNSEEVVRENKKKPVGEQEKA.

2 disordered regions span residues 1 to 97 (MSAS…APAA) and 176 to 211 (ENNN…NSSQ). Positions 47–57 (STTTTTSRTPS) are enriched in low complexity. The span at 185 to 202 (VTEDDEDLGEDGDEDGED) shows a compositional bias: acidic residues. T186 carries the post-translational modification Phosphothreonine. A C2H2-type 1; atypical zinc finger spans residues 220–242 (HVCGKCYKTFRRVQSLKKHLEFC). The segment at 290 to 313 (INCPDCPKSFKTQTSYERHIFITH) adopts a C2H2-type 2 zinc-finger fold. A C2H2-type 3; atypical zinc finger spans residues 319–341 (FPCSICNANLRSEALLALHEEQH). 9 consecutive C2H2-type zinc fingers follow at residues 348–366 (YACK…LKRH), 380–402 (MSCK…LKQH), 413–435 (YMCH…IRTH), 441–463 (FDCD…RRYH), 469–491 (YSCT…MKRH), 497–519 (HKCD…SKTH), 523–545 (FPCE…VKTH), 553–577 (FSCA…EGKH), and 596–619 (TDCA…RTVH). Residues 760-860 (ILTEEDIKLK…PIDDVIEYVL (101 aa)) form an interaction with mod(mdg4) region. The tract at residues 864 to 941 (DQDEGGLDKD…KKPVGEQEKA (78 aa)) is disordered. Basic and acidic residues-rich tracts occupy residues 869-880 (GLDKDNESHSGD) and 891-941 (KTNE…QEKA).

Component of the gypsy chromatin insulator complex, composed of Cp190, mod(mdg4) and su(Hw). The gypsy chromatin insulator complex interacts with Topors via mod(mdg4) and su(Hw). Upon ecdysone stimulation, interacts with Nup98.

It is found in the nucleus. It localises to the chromosome. Component of the gypsy chromatin insulator complex which is required for the function of the gypsy chromatin insulator and other endogenous chromatin insulators. Chromatin insulators are regulatory elements which establish independent domains of transcriptional activity within eukaryotic genomes. Insulators have two defining properties; they can block the communication between an enhancer and a promoter when placed between them and can also buffer transgenes from position effect variegation (PEV). Insulators are proposed to structure the chromatin fiber into independent domains of differing transcriptional potential by promoting the formation of distinct chromatin loops. This chromatin looping may involve the formation of insulator bodies, where homotypic interactions between individual subunits of the insulator complex could promote the clustering of widely spaced insulators at the nuclear periphery. Within the gypsy insulator complex, this protein binds specifically to a region of the gypsy element located 3' of the 5' long terminal repeat (LTR), and may also mediate interaction with other endogenous insulators at sites distinct from those recognized by Cp190. Cooperates with pita and cliff to recruit Cp190 and regulate insulator function at the front-ultraabdominal (Fub) boundary. The protein is Zinc finger protein su(Hw) of Drosophila melanogaster (Fruit fly).